The following is a 444-amino-acid chain: Glutamate--tRNA ligase 1 (444 aa).

The short motif at 7–17 is the 'HIGH' region element; that stretch reads PSPTGYLHVGN. The 'KMSKS' region signature appears at 238-242; it reads KISKR. Position 241 (K241) interacts with ATP.

It belongs to the class-I aminoacyl-tRNA synthetase family. Glutamate--tRNA ligase type 1 subfamily. As to quaternary structure, monomer.

Its subcellular location is the cytoplasm. It catalyses the reaction tRNA(Glu) + L-glutamate + ATP = L-glutamyl-tRNA(Glu) + AMP + diphosphate. Catalyzes the attachment of glutamate to tRNA(Glu) in a two-step reaction: glutamate is first activated by ATP to form Glu-AMP and then transferred to the acceptor end of tRNA(Glu). The protein is Glutamate--tRNA ligase 1 of Wolbachia pipientis subsp. Culex pipiens (strain wPip).